Consider the following 167-residue polypeptide: NADH-ubiquinone oxidoreductase chain 6 (167 aa).

4 consecutive transmembrane segments (helical) span residues 21–41 (SPYY…LLLL), 45–65 (IIFP…VVFI), 78–98 (PINL…ITMI), and 132–152 (SMFI…LEVV).

It belongs to the complex I subunit 6 family.

The protein resides in the mitochondrion membrane. It carries out the reaction a ubiquinone + NADH + 5 H(+)(in) = a ubiquinol + NAD(+) + 4 H(+)(out). Core subunit of the mitochondrial membrane respiratory chain NADH dehydrogenase (Complex I) that is believed to belong to the minimal assembly required for catalysis. Complex I functions in the transfer of electrons from NADH to the respiratory chain. The immediate electron acceptor for the enzyme is believed to be ubiquinone. This is NADH-ubiquinone oxidoreductase chain 6 (ND6) from Branchiostoma floridae (Florida lancelet).